The chain runs to 84 residues: ORF8b protein (84 aa).

The 82-residue stretch at 1–82 (MCLKILVRYN…RDVLVVLNKR (82 aa)) folds into the SARS ORF8 Ig-like domain. Cys22 and Cys40 are oxidised to a cystine.

Its subcellular location is the host cytoplasm. The protein localises to the host nucleus. Non-structural protein which is dispensable for virus replication in cell culture. The sequence is that of ORF8b protein from Severe acute respiratory syndrome coronavirus (SARS-CoV).